Here is a 100-residue protein sequence, read N- to C-terminus: Large ribosomal subunit protein uL23 (100 aa).

It belongs to the universal ribosomal protein uL23 family. As to quaternary structure, part of the 50S ribosomal subunit. Contacts protein L29, and trigger factor when it is bound to the ribosome.

Its function is as follows. One of the early assembly proteins it binds 23S rRNA. One of the proteins that surrounds the polypeptide exit tunnel on the outside of the ribosome. Forms the main docking site for trigger factor binding to the ribosome. In Shewanella pealeana (strain ATCC 700345 / ANG-SQ1), this protein is Large ribosomal subunit protein uL23.